Reading from the N-terminus, the 126-residue chain is Fluoride-specific ion channel FluC 3 (126 aa).

The next 4 membrane-spanning stretches (helical) occupy residues 7–27, 37–57, 68–87, and 101–121; these read MWVG…GLSI, LGTF…SILF, LMNT…FSSM, and AIAA…AAFG. The Na(+) site is built by Gly-79 and Thr-82.

Belongs to the fluoride channel Fluc/FEX (TC 1.A.43) family.

The protein localises to the cell inner membrane. The catalysed reaction is fluoride(in) = fluoride(out). Its activity is regulated as follows. Na(+) is not transported, but it plays an essential structural role and its presence is essential for fluoride channel function. Fluoride-specific ion channel. Important for reducing fluoride concentration in the cell, thus reducing its toxicity. This Yersinia pestis protein is Fluoride-specific ion channel FluC 3.